The chain runs to 410 residues: O-methyltransferase afvC (410 aa).

Residues 253–254 (GG), Asp278, 299–300 (DF), and Arg315 each bind S-adenosyl-L-methionine. The active-site Proton acceptor is the His319.

This sequence belongs to the class I-like SAM-binding methyltransferase superfamily. Cation-independent O-methyltransferase family. COMT subfamily.

The protein operates within secondary metabolite biosynthesis. Functionally, O-methyltransferase; part of the gene cluster that mediates the biosynthesis of aflavarin, a bicoumarin that exhibits anti-insectan activity against the fungivorous beetle C.hemipterus. The polypeptide is O-methyltransferase afvC (Aspergillus flavus (strain ATCC 200026 / FGSC A1120 / IAM 13836 / NRRL 3357 / JCM 12722 / SRRC 167)).